The primary structure comprises 423 residues: MKVPPVLLLFLLSSVRATEQPQVVTEHPSMEAALTGPNASSHFWANYTFSDWQNFVGRRRYGAESQNPTVKALLIVAYSFTIVFSLFGNVLVCHVIFKNQRMHSATSLFIVNLAVADIMITLLNTPFTLVRFVNSTWVFGKGMCHVSRFAQYCSLHVSALTLTAIAVDRHQVIMHPLKPRISITKGVIYIAVIWVMATFFSLPHAICQKLFTFKYSEDIVRSLCLPDFPEPADLFWKYLDLATFILLYLLPLFIISVAYARVAKKLWLCNTIGDVTTEQYLALRRKKKTTVKMLVLVVVLFALCWFPLNCYVLLLSSKAIHTNNALYFAFHWFAMSSTCYNPFIYCWLNENFRVELKALLSMCQRPPKPQEDRLPSPVPSFRVAWTEKSHGRRAPLPNHHLPSSQIQSGKTDLSSVEPVVAMS.

Residues 1 to 17 (MKVPPVLLLFLLSSVRA) form the signal peptide. Topologically, residues 18 to 71 (TEQPQVVTEHPSMEAALTGPNASSHFWANYTFSDWQNFVGRRRYGAESQNPTVK) are extracellular. 2 N-linked (GlcNAc...) asparagine glycosylation sites follow: Asn-38 and Asn-46. Residues 72 to 92 (ALLIVAYSFTIVFSLFGNVLV) form a helical membrane-spanning segment. At 93–107 (CHVIFKNQRMHSATS) the chain is on the cytoplasmic side. Residues 108–129 (LFIVNLAVADIMITLLNTPFTL) form a helical membrane-spanning segment. Residues 130-145 (VRFVNSTWVFGKGMCH) are Extracellular-facing. Asn-134 carries an N-linked (GlcNAc...) asparagine glycan. An intrachain disulfide couples Cys-144 to Cys-224. Residues 146 to 167 (VSRFAQYCSLHVSALTLTAIAV) form a helical membrane-spanning segment. Topologically, residues 168–186 (DRHQVIMHPLKPRISITKG) are cytoplasmic. Residues 187 to 208 (VIYIAVIWVMATFFSLPHAICQ) traverse the membrane as a helical segment. The Extracellular portion of the chain corresponds to 209–238 (KLFTFKYSEDIVRSLCLPDFPEPADLFWKY). Residues 239–260 (LDLATFILLYLLPLFIISVAYA) traverse the membrane as a helical segment. Topologically, residues 261–293 (RVAKKLWLCNTIGDVTTEQYLALRRKKKTTVKM) are cytoplasmic. The helical transmembrane segment at 294-315 (LVLVVVLFALCWFPLNCYVLLL) threads the bilayer. Topologically, residues 316–327 (SSKAIHTNNALY) are extracellular. A helical membrane pass occupies residues 328–348 (FAFHWFAMSSTCYNPFIYCWL). The Cytoplasmic portion of the chain corresponds to 349–423 (NENFRVELKA…SSVEPVVAMS (75 aa)). A disordered region spans residues 389–423 (SHGRRAPLPNHHLPSSQIQSGKTDLSSVEPVVAMS). Polar residues predominate over residues 401–414 (LPSSQIQSGKTDLS).

The protein belongs to the G-protein coupled receptor 1 family. As to expression, predominantly expressed in the brain, with moderate expression in the hypothalamus. Expressed in the thymus.

It is found in the cell membrane. Functionally, G-protein coupled receptor for PEN, a neuropeptide produced from the precursor protein, proSAAS (encoded by PCSK1N). Acts through a G(i)- and G(q)-alpha-alpha-mediated pathway in response to PEN. Plays a role in food intake and body weight regulation. May contribute to the regulation of anxiety-related behaviors. The polypeptide is G-protein coupled receptor 83 (Mus musculus (Mouse)).